A 116-amino-acid polypeptide reads, in one-letter code: Large ribosomal subunit protein bL17 (116 aa).

It belongs to the bacterial ribosomal protein bL17 family. In terms of assembly, part of the 50S ribosomal subunit. Contacts protein L32.

The protein is Large ribosomal subunit protein bL17 of Prochlorococcus marinus (strain MIT 9301).